The sequence spans 463 residues: UDP-N-acetylmuramoylalanine--D-glutamate ligase (463 aa).

116 to 122 (GTNGKTT) lines the ATP pocket.

The protein belongs to the MurCDEF family.

The protein localises to the cytoplasm. The enzyme catalyses UDP-N-acetyl-alpha-D-muramoyl-L-alanine + D-glutamate + ATP = UDP-N-acetyl-alpha-D-muramoyl-L-alanyl-D-glutamate + ADP + phosphate + H(+). The protein operates within cell wall biogenesis; peptidoglycan biosynthesis. In terms of biological role, cell wall formation. Catalyzes the addition of glutamate to the nucleotide precursor UDP-N-acetylmuramoyl-L-alanine (UMA). The chain is UDP-N-acetylmuramoylalanine--D-glutamate ligase from Synechococcus elongatus (strain ATCC 33912 / PCC 7942 / FACHB-805) (Anacystis nidulans R2).